Consider the following 89-residue polypeptide: Small ribosomal subunit protein uS15 (89 aa).

Belongs to the universal ribosomal protein uS15 family. Part of the 30S ribosomal subunit. Forms a bridge to the 50S subunit in the 70S ribosome, contacting the 23S rRNA.

One of the primary rRNA binding proteins, it binds directly to 16S rRNA where it helps nucleate assembly of the platform of the 30S subunit by binding and bridging several RNA helices of the 16S rRNA. In terms of biological role, forms an intersubunit bridge (bridge B4) with the 23S rRNA of the 50S subunit in the ribosome. This is Small ribosomal subunit protein uS15 from Shewanella halifaxensis (strain HAW-EB4).